We begin with the raw amino-acid sequence, 393 residues long: F-box/kelch-repeat protein At4g19865 (393 aa).

The interval 1–30 (MNFQVEPPEKKKTKNSSPPHSPPSSSSPSL) is disordered. The region spanning 27–73 (SPSLSLLPEEIVVHCLARISRLYYPTLSLVSKSFRSILSSTELYATR) is the F-box domain. Kelch repeat units lie at residues 148-190 (EIYV…FHDG), 191-237 (KIYV…RSGV), 239-272 (EGKIEFGNVNEMCAYDTKLCKWEYCVNKSAALRS), and 273-320 (ECMI…GGSS).

The protein is F-box/kelch-repeat protein At4g19865 of Arabidopsis thaliana (Mouse-ear cress).